Consider the following 636-residue polypeptide: Biosynthetic arginine decarboxylase (636 aa).

An N6-(pyridoxal phosphate)lysine modification is found at K101. Residue 286 to 296 coordinates substrate; it reads FDVGGGLAVDY.

It belongs to the Orn/Lys/Arg decarboxylase class-II family. SpeA subfamily. Mg(2+) serves as cofactor. Pyridoxal 5'-phosphate is required as a cofactor.

It catalyses the reaction L-arginine + H(+) = agmatine + CO2. The protein operates within amine and polyamine biosynthesis; agmatine biosynthesis; agmatine from L-arginine: step 1/1. In terms of biological role, catalyzes the biosynthesis of agmatine from arginine. The sequence is that of Biosynthetic arginine decarboxylase from Shewanella frigidimarina (strain NCIMB 400).